The sequence spans 356 residues: UDP-N-acetylglucosamine--N-acetylmuramyl-(pentapeptide) pyrophosphoryl-undecaprenol N-acetylglucosamine transferase (356 aa).

UDP-N-acetyl-alpha-D-glucosamine contacts are provided by Arg166, Ser196, and Gln290.

The protein belongs to the glycosyltransferase 28 family. MurG subfamily.

The protein localises to the cell membrane. The enzyme catalyses Mur2Ac(oyl-L-Ala-gamma-D-Glu-L-Lys-D-Ala-D-Ala)-di-trans,octa-cis-undecaprenyl diphosphate + UDP-N-acetyl-alpha-D-glucosamine = beta-D-GlcNAc-(1-&gt;4)-Mur2Ac(oyl-L-Ala-gamma-D-Glu-L-Lys-D-Ala-D-Ala)-di-trans,octa-cis-undecaprenyl diphosphate + UDP + H(+). It participates in cell wall biogenesis; peptidoglycan biosynthesis. Functionally, cell wall formation. Catalyzes the transfer of a GlcNAc subunit on undecaprenyl-pyrophosphoryl-MurNAc-pentapeptide (lipid intermediate I) to form undecaprenyl-pyrophosphoryl-MurNAc-(pentapeptide)GlcNAc (lipid intermediate II). In Staphylococcus aureus (strain bovine RF122 / ET3-1), this protein is UDP-N-acetylglucosamine--N-acetylmuramyl-(pentapeptide) pyrophosphoryl-undecaprenol N-acetylglucosamine transferase.